The chain runs to 117 residues: Large ribosomal subunit protein uL18 (117 aa).

Belongs to the universal ribosomal protein uL18 family. Part of the 50S ribosomal subunit; part of the 5S rRNA/L5/L18/L25 subcomplex. Contacts the 5S and 23S rRNAs.

Functionally, this is one of the proteins that bind and probably mediate the attachment of the 5S RNA into the large ribosomal subunit, where it forms part of the central protuberance. The protein is Large ribosomal subunit protein uL18 of Glaesserella parasuis serovar 5 (strain SH0165) (Haemophilus parasuis).